The sequence spans 1077 residues: FKBP12-associated protein 1 homolog (1077 aa).

Positions 1-173 (METSKNPSDL…MPKNSKEIKK (173 aa)) are disordered. Over residues 15-29 (ANVKKNRRRFQKSQK) the composition is skewed to basic residues. Residue S33 is modified to Phosphoserine. Basic and acidic residues predominate over residues 52 to 64 (EEVKTSLKEDSSK). Residues 76 to 87 (PTSSVQLNVSKN) show a composition bias toward polar residues. Basic and acidic residues predominate over residues 100-116 (SSKDEELRKHAKGEGKR). Over residues 136 to 149 (SSNSSQETSSSKGS) the composition is skewed to low complexity. The segment covering 153–173 (KSERSREAKSRMPKNSKEIKK) has biased composition (basic and acidic residues). An RING-type; atypical zinc finger spans residues 197–247 (CSVCTDTINPSTSIWSCGTCYHVFHLSCIRKWCKNSIEQRNEDAWRCPYCQ). 8 NF-X1-type zinc fingers span residues 290–308 (CEHPCPLLCHPGPCPPCTA), 348–367 (CGEHTCKKRCHSGLCGACFE), 420–441 (CGLHKCSKTCHPISETRAHCPF), 485–503 (CGHRCKYKCHLGSCGTCSE), 541–558 (CGRHQCNKKCCSGYSKAQ), 595–614 (CGNHFCQHMCHRGPCPRCLE), 708–729 (CKTHFCEKLCHPDGECESSCKK), and 738–760 (CEHVCQSPCHAGHPCDERIPCKA). Residues 835-897 (SDFADEVESL…KRNVMVYNKG (63 aa)) enclose the R3H domain.

It belongs to the NFX1 family.

It localises to the cytoplasm. It is found in the golgi apparatus. The protein localises to the nucleus. Functionally, may play a role in transcription regulation. The protein is FKBP12-associated protein 1 homolog (fap1) of Schizosaccharomyces pombe (strain 972 / ATCC 24843) (Fission yeast).